Consider the following 507-residue polypeptide: MRRLPRALLLQLRLALLVAAGAPEVLVSAPRSLVWGPGLQAAVVLPVRYFYLQAVNSEGQNLTRSPAGETPFKVVVKSLSPKELVRIHVPKPLDRNDGTFLMRYRMYETVDEGLKIEVLYGDEHVAQSPYILKGPVYHEYCECPEDPQAWQKTLSCPTKEPQIAKDFASFPSINLQQMLKEVPKRFGDERGAIVHYTILNNHVYRRSLGKYTDFKMFSDEILLSLTRKVLLPDLEFYVNLGDWPLEHRKVNGTPSPIPIISWCGSLDSRDVVLPTYDITHSMLEAMRGVTNDLLSIQGNTGPSWINKTERAFFRGRDSREERLQLVQLSKENPQLLDAGITGYFFFQEKEKELGKAKLMGFFDFFKYKYQVNVDGTVAAYRYPYLMLGDSLVLKQDSPYYEHFYMALEPWKHYVPIKRNLSDLLEKVKWAKENDEEAKKIAKEGQLMARDLLQPHRLYCYYYQVLQKYAERQSSKPEVRDGMELVPQPEDSTAICQCHRKKPSREEL.

The signal sequence occupies residues 1–20 (MRRLPRALLLQLRLALLVAA). The stretch at 24-134 (EVLVSAPRSL…VAQSPYILKG (111 aa)) is one Filamin repeat. N-linked (GlcNAc...) asparagine glycosylation is found at N61 and N306. A Prevents secretion from ER motif is present at residues 504 to 507 (REEL).

Belongs to the KDELC family.

It localises to the endoplasmic reticulum lumen. The catalysed reaction is L-seryl-[EGF-like domain protein] + UDP-alpha-D-glucose = 3-O-(beta-D-glucosyl)-L-seryl-[EGF-like domain protein] + UDP + H(+). It catalyses the reaction L-seryl-[EGF-like domain protein] + UDP-alpha-D-xylose = 3-O-(beta-D-xylosyl)-L-seryl-[EGF-like domain protein] + UDP + H(+). The protein operates within protein modification; protein glycosylation. Its function is as follows. Protein glucosyltransferase that catalyzes the transfer of glucose from UDP-glucose to a serine residue within the consensus sequence peptide C-X-N-T-X-G-S-F-X-C. Can also catalyze the transfer of xylose from UDP-xylose but less efficiently. Specifically targets extracellular EGF repeats of proteins such as NOTCH1, NOTCH3, FBN1, FBN2 and LTBP1. May regulate the transport of NOTCH1 and NOTCH3 to the plasma membrane and thereby the Notch signaling pathway. The chain is Protein O-glucosyltransferase 3 from Homo sapiens (Human).